A 147-amino-acid polypeptide reads, in one-letter code: Methylmalonyl-CoA mutase homolog (147 aa).

It to methylmalonyl-CoA mutase.

This is Methylmalonyl-CoA mutase homolog from Alkalihalophilus pseudofirmus (strain ATCC BAA-2126 / JCM 17055 / OF4) (Bacillus pseudofirmus).